The sequence spans 161 residues: Putative pre-16S rRNA nuclease (161 aa).

This sequence belongs to the YqgF nuclease family.

It is found in the cytoplasm. Its function is as follows. Could be a nuclease involved in processing of the 5'-end of pre-16S rRNA. The polypeptide is Putative pre-16S rRNA nuclease (Bradyrhizobium diazoefficiens (strain JCM 10833 / BCRC 13528 / IAM 13628 / NBRC 14792 / USDA 110)).